Consider the following 95-residue polypeptide: Aspartyl/glutamyl-tRNA(Asn/Gln) amidotransferase subunit C (95 aa).

The protein belongs to the GatC family. In terms of assembly, heterotrimer of A, B and C subunits.

It catalyses the reaction L-glutamyl-tRNA(Gln) + L-glutamine + ATP + H2O = L-glutaminyl-tRNA(Gln) + L-glutamate + ADP + phosphate + H(+). The catalysed reaction is L-aspartyl-tRNA(Asn) + L-glutamine + ATP + H2O = L-asparaginyl-tRNA(Asn) + L-glutamate + ADP + phosphate + 2 H(+). Allows the formation of correctly charged Asn-tRNA(Asn) or Gln-tRNA(Gln) through the transamidation of misacylated Asp-tRNA(Asn) or Glu-tRNA(Gln) in organisms which lack either or both of asparaginyl-tRNA or glutaminyl-tRNA synthetases. The reaction takes place in the presence of glutamine and ATP through an activated phospho-Asp-tRNA(Asn) or phospho-Glu-tRNA(Gln). The polypeptide is Aspartyl/glutamyl-tRNA(Asn/Gln) amidotransferase subunit C (Pelagibacter ubique (strain HTCC1062)).